The chain runs to 540 residues: Esterase B1 (540 aa).

C68 and C81 form a disulfide bridge. S191 (acyl-ester intermediate) is an active-site residue. Catalysis depends on charge relay system residues E324 and H442. N452 carries an N-linked (GlcNAc...) asparagine glycan.

It belongs to the type-B carboxylesterase/lipase family.

It catalyses the reaction a carboxylic ester + H2O = an alcohol + a carboxylate + H(+). Functionally, overproduction of nonspecific esterases is a common mechanism of resistance to organophosphate insecticides. The sequence is that of Esterase B1 (B1) from Culex pipiens (House mosquito).